The sequence spans 286 residues: Bifunctional protein FolD (286 aa).

NADP(+) contacts are provided by residues 165–167 (GRS) and serine 190.

It belongs to the tetrahydrofolate dehydrogenase/cyclohydrolase family. In terms of assembly, homodimer.

It catalyses the reaction (6R)-5,10-methylene-5,6,7,8-tetrahydrofolate + NADP(+) = (6R)-5,10-methenyltetrahydrofolate + NADPH. The enzyme catalyses (6R)-5,10-methenyltetrahydrofolate + H2O = (6R)-10-formyltetrahydrofolate + H(+). Its pathway is one-carbon metabolism; tetrahydrofolate interconversion. Its function is as follows. Catalyzes the oxidation of 5,10-methylenetetrahydrofolate to 5,10-methenyltetrahydrofolate and then the hydrolysis of 5,10-methenyltetrahydrofolate to 10-formyltetrahydrofolate. This is Bifunctional protein FolD from Staphylococcus aureus (strain JH9).